Consider the following 180-residue polypeptide: NAD(P)H-quinone oxidoreductase subunit I, chloroplastic (180 aa).

4Fe-4S ferredoxin-type domains lie at 55 to 84 (GRIH…VDWR) and 95 to 124 (LNYS…MTEE). [4Fe-4S] cluster is bound by residues Cys64, Cys67, Cys70, Cys74, Cys104, Cys107, Cys110, and Cys114.

Belongs to the complex I 23 kDa subunit family. In terms of assembly, NDH is composed of at least 16 different subunits, 5 of which are encoded in the nucleus. The cofactor is [4Fe-4S] cluster.

The protein localises to the plastid. It is found in the chloroplast thylakoid membrane. It carries out the reaction a plastoquinone + NADH + (n+1) H(+)(in) = a plastoquinol + NAD(+) + n H(+)(out). The catalysed reaction is a plastoquinone + NADPH + (n+1) H(+)(in) = a plastoquinol + NADP(+) + n H(+)(out). Functionally, NDH shuttles electrons from NAD(P)H:plastoquinone, via FMN and iron-sulfur (Fe-S) centers, to quinones in the photosynthetic chain and possibly in a chloroplast respiratory chain. The immediate electron acceptor for the enzyme in this species is believed to be plastoquinone. Couples the redox reaction to proton translocation, and thus conserves the redox energy in a proton gradient. The chain is NAD(P)H-quinone oxidoreductase subunit I, chloroplastic from Liriodendron tulipifera (Tuliptree).